We begin with the raw amino-acid sequence, 120 residues long: Large ribosomal subunit protein uL18 (120 aa).

The protein belongs to the universal ribosomal protein uL18 family. In terms of assembly, part of the 50S ribosomal subunit; part of the 5S rRNA/L5/L18/L25 subcomplex. Contacts the 5S and 23S rRNAs.

Functionally, this is one of the proteins that bind and probably mediate the attachment of the 5S RNA into the large ribosomal subunit, where it forms part of the central protuberance. In Paramagnetospirillum magneticum (strain ATCC 700264 / AMB-1) (Magnetospirillum magneticum), this protein is Large ribosomal subunit protein uL18.